A 214-amino-acid chain; its full sequence is Thymidylate kinase (214 aa).

10 to 17 (GGEGAGKS) serves as a coordination point for ATP.

Belongs to the thymidylate kinase family.

It carries out the reaction dTMP + ATP = dTDP + ADP. In terms of biological role, phosphorylation of dTMP to form dTDP in both de novo and salvage pathways of dTTP synthesis. In Brucella abortus (strain S19), this protein is Thymidylate kinase.